A 221-amino-acid chain; its full sequence is Orotate phosphoribosyltransferase (221 aa).

K26 lines the 5-phospho-alpha-D-ribose 1-diphosphate pocket. 34-35 serves as a coordination point for orotate; that stretch reads FF. 5-phospho-alpha-D-ribose 1-diphosphate contacts are provided by residues 72–73, R98, K99, K102, H104, and 123–131; these read YK and DDVISAGTS. Positions 127 and 155 each coordinate orotate.

Belongs to the purine/pyrimidine phosphoribosyltransferase family. PyrE subfamily. As to quaternary structure, homodimer. The cofactor is Mg(2+).

It carries out the reaction orotidine 5'-phosphate + diphosphate = orotate + 5-phospho-alpha-D-ribose 1-diphosphate. The protein operates within pyrimidine metabolism; UMP biosynthesis via de novo pathway; UMP from orotate: step 1/2. In terms of biological role, catalyzes the transfer of a ribosyl phosphate group from 5-phosphoribose 1-diphosphate to orotate, leading to the formation of orotidine monophosphate (OMP). The protein is Orotate phosphoribosyltransferase of Herminiimonas arsenicoxydans.